Consider the following 132-residue polypeptide: Small ribosomal subunit protein uS11 (132 aa).

The disordered stretch occupies residues 1–24 (MAAQKQAARKPRRRDRKSVPVGQA). Positions 7 to 16 (AARKPRRRDR) are enriched in basic residues.

Belongs to the universal ribosomal protein uS11 family. As to quaternary structure, part of the 30S ribosomal subunit. Interacts with proteins S7 and S18. Binds to IF-3.

In terms of biological role, located on the platform of the 30S subunit, it bridges several disparate RNA helices of the 16S rRNA. Forms part of the Shine-Dalgarno cleft in the 70S ribosome. This is Small ribosomal subunit protein uS11 from Bifidobacterium adolescentis (strain ATCC 15703 / DSM 20083 / NCTC 11814 / E194a).